The following is a 189-amino-acid chain: Probable DNA-directed RNA polymerase subunit delta (189 aa).

In terms of domain architecture, HTH HARE-type spans 14-81 (LSMIEVAHAI…GENVWALRTW (68 aa)). 2 stretches are compositionally biased toward acidic residues: residues 90-100 (EVDHPEDDGDE) and 118-189 (EGDD…EDEE). Residues 90 to 189 (EVDHPEDDGD…DDLDDDEDEE (100 aa)) form a disordered region.

It belongs to the RpoE family. In terms of assembly, RNAP is composed of a core of 2 alpha, a beta and a beta' subunits. The core is associated with a delta subunit and one of several sigma factors.

Participates in both the initiation and recycling phases of transcription. In the presence of the delta subunit, RNAP displays an increased specificity of transcription, a decreased affinity for nucleic acids, and an increased efficiency of RNA synthesis because of enhanced recycling. This chain is Probable DNA-directed RNA polymerase subunit delta, found in Lactobacillus delbrueckii subsp. bulgaricus (strain ATCC 11842 / DSM 20081 / BCRC 10696 / JCM 1002 / NBRC 13953 / NCIMB 11778 / NCTC 12712 / WDCM 00102 / Lb 14).